The primary structure comprises 371 residues: tRNA-specific 2-thiouridylase MnmA (371 aa).

ATP is bound by residues 11–18 (GMSGGVDS) and Met-37. The interval 97-99 (NPD) is interaction with target base in tRNA. Cys-102 serves as the catalytic Nucleophile. A disulfide bond links Cys-102 and Cys-199. ATP is bound at residue Gly-127. Residues 149 to 151 (KDQ) are interaction with tRNA. Cys-199 serves as the catalytic Cysteine persulfide intermediate. An interaction with tRNA region spans residues 311–312 (RY).

The protein belongs to the MnmA/TRMU family.

Its subcellular location is the cytoplasm. The enzyme catalyses S-sulfanyl-L-cysteinyl-[protein] + uridine(34) in tRNA + AH2 + ATP = 2-thiouridine(34) in tRNA + L-cysteinyl-[protein] + A + AMP + diphosphate + H(+). Its function is as follows. Catalyzes the 2-thiolation of uridine at the wobble position (U34) of tRNA, leading to the formation of s(2)U34. This is tRNA-specific 2-thiouridylase MnmA from Idiomarina loihiensis (strain ATCC BAA-735 / DSM 15497 / L2-TR).